The chain runs to 85 residues: MASLLQLRDAIALNGSAEASQLSRQLAIPLPLVNAMLEKLTAMGKIERIELDHSGCLTGSCKSCPEGHQHCNTVIYQLKEPHAHQ.

Positions 56, 61, 64, and 71 each coordinate iron-sulfur cluster.

This sequence belongs to the FeoC family.

Functionally, may function as a transcriptional regulator that controls feoABC expression. This is Probable [Fe-S]-dependent transcriptional repressor from Yersinia pseudotuberculosis serotype O:1b (strain IP 31758).